Reading from the N-terminus, the 476-residue chain is Nuclear envelope morphology protein 1 (476 aa).

The interval 47 to 74 is disordered; sequence RRRSSYSASSLSSLSSKPTEKEVPTRNE. The segment covering 51–62 has biased composition (low complexity); sequence SYSASSLSSLSS. Positions 64–74 are enriched in basic and acidic residues; it reads PTEKEVPTRNE. Residues 123-139 traverse the membrane as a helical segment; it reads FFWGLCRFVFFPVLLSY. Disordered regions lie at residues 164 to 190 and 232 to 256; these read SSHQ…SNGN and GKAN…PAND. A compositionally biased stretch (polar residues) spans 234 to 256; sequence ANSNRSGHSHQPQSTQFSPPAND. Asn-237, Asn-257, Asn-284, and Asn-356 each carry an N-linked (GlcNAc...) asparagine glycan. Residues 299–460 form the FCP1 homology domain; the sequence is SKLPRKTLVL…LNLLSFLHAL (162 aa).

The protein belongs to the Dullard family. Component of the nem1-spo7 complex.

It is found in the endoplasmic reticulum membrane. The protein localises to the nucleus membrane. It catalyses the reaction O-phospho-L-seryl-[protein] + H2O = L-seryl-[protein] + phosphate. It carries out the reaction O-phospho-L-threonyl-[protein] + H2O = L-threonyl-[protein] + phosphate. Catalytic component of the nem1-spo7 complex which acts as a phosphatase and may be required for proper nuclear membrane morphology. This Schizosaccharomyces pombe (strain 972 / ATCC 24843) (Fission yeast) protein is Nuclear envelope morphology protein 1 (nem1).